The sequence spans 384 residues: Gibberellin 3-beta-dioxygenase 1 (384 aa).

The Fe2OG dioxygenase domain maps to 225–327 (TLTSTIHLNM…RISMPYFLGP (103 aa)). Residues H250, D252, and H308 each contribute to the Fe cation site. Positions 318 and 320 each coordinate 2-oxoglutarate.

It belongs to the iron/ascorbate-dependent oxidoreductase family. Requires L-ascorbate as cofactor. The cofactor is Fe(2+). As to expression, expressed in unopened flowers.

The catalysed reaction is gibberellin A20 + 2-oxoglutarate + O2 = gibberellin A1 + succinate + CO2. Its pathway is plant hormone biosynthesis; gibberellin biosynthesis. Its function is as follows. Catalyzes the 3-beta-hydroxylation of the inactive gibberellin precursors, leading to the formation of bioactive gibberellins. In vitro, converts the precursors GA20, GA5, GA44 and GA9 to the corresponding 3-beta-hydroxylated bioactive products GA1, GA3, GA38 and GA4, respectively. Involved in the production of bioactive GA for vegetative growth and development. May possess 2,3-desaturase activity, catalyzing the conversion of GA9 to 2,3-dehydro-GA9, and GA20 to GA5 (2,3-dehydro GA20). May possess 2-beta-hydroxylase activity, catalyzing the conversion of GA1 and GA4 to the corresponding 2-beta-hydroxylated products GA8 and GA34, respectively. The polypeptide is Gibberellin 3-beta-dioxygenase 1 (Oryza sativa subsp. japonica (Rice)).